The following is a 319-amino-acid chain: NADH-quinone oxidoreductase subunit H 1 (319 aa).

The next 9 helical transmembrane spans lie at 5-25 (ILTA…AGVF), 78-98 (LAPA…AFGE), 109-129 (VMFL…GALA), 147-167 (LAYE…AGSL), 179-199 (VWFI…GIAA), 214-234 (LVGG…FLGE), 238-258 (ILLV…GPWL), 262-282 (IWFG…RAAL), and 294-314 (AWKV…FIVV).

It belongs to the complex I subunit 1 family. As to quaternary structure, NDH-1 is composed of 14 different subunits. Subunits NuoA, H, J, K, L, M, N constitute the membrane sector of the complex.

It localises to the cell inner membrane. It catalyses the reaction a quinone + NADH + 5 H(+)(in) = a quinol + NAD(+) + 4 H(+)(out). In terms of biological role, NDH-1 shuttles electrons from NADH, via FMN and iron-sulfur (Fe-S) centers, to quinones in the respiratory chain. The immediate electron acceptor for the enzyme in this species is believed to be ubiquinone. Couples the redox reaction to proton translocation (for every two electrons transferred, four hydrogen ions are translocated across the cytoplasmic membrane), and thus conserves the redox energy in a proton gradient. This subunit may bind ubiquinone. The sequence is that of NADH-quinone oxidoreductase subunit H 1 from Rhodopseudomonas palustris (strain BisA53).